The chain runs to 727 residues: Two-component response regulator-like APRR7 (727 aa).

The tract at residues M1–V47 is disordered. Residues I14–T40 show a composition bias toward basic and acidic residues. A Response regulatory domain is found at R79–W197. Disordered stretches follow at residues S203–V265, N291–D312, K339–D416, S464–D487, E509–P560, and V606–E670. Positions A246 to S259 are enriched in low complexity. Composition is skewed to polar residues over residues S344–D353, N467–D487, and V519–F535. The span at P538–S555 shows a compositional bias: low complexity. Over residues G641–S657 the composition is skewed to gly residues. Residues R669–K711 form the CCT domain.

This sequence belongs to the ARR-like family. In terms of processing, phosphorylated. Phosphorylation varies throughout the diurnal cycle.

Its subcellular location is the nucleus. Functionally, transcriptional repressor of CCA1 and LHY, and positive regulator of LWD1 and LWD2 expression. Represses the expression of other clock proteins and master regulators of plant growth, development and response to abiotic stress. Involved in the positive and negative feedback loops of the circadian clock. Controls photoperiodic flowering response and temperature compensation. Expression of several members of the ARR-like family is controlled by circadian rhythm. APRR9, APRR7, and APRR5 coordinately act on the upstream region of the target genes to repress their expression from noon until midnight. The particular coordinated sequential expression of APRR9, APRR7, APRR5, APRR3 and APPR1 result to circadian waves that may be at the basis of the endogenous circadian clock. In Arabidopsis thaliana (Mouse-ear cress), this protein is Two-component response regulator-like APRR7 (APRR7).